A 303-amino-acid chain; its full sequence is Oxygen-dependent coproporphyrinogen-III oxidase (303 aa).

Serine 93 serves as a coordination point for substrate. A divalent metal cation contacts are provided by histidine 97 and histidine 107. The active-site Proton donor is the histidine 107. 109-111 serves as a coordination point for substrate; the sequence is NVR. Histidine 146 and histidine 176 together coordinate a divalent metal cation. Residues 241–276 are important for dimerization; it reads YVEFNLVYDRGTLFGLQSGGRTESILMSLPPQVRWG. Residue 259-261 coordinates substrate; sequence GGR.

This sequence belongs to the aerobic coproporphyrinogen-III oxidase family. As to quaternary structure, homodimer. The cofactor is a divalent metal cation.

It localises to the cytoplasm. The catalysed reaction is coproporphyrinogen III + O2 + 2 H(+) = protoporphyrinogen IX + 2 CO2 + 2 H2O. The protein operates within porphyrin-containing compound metabolism; protoporphyrin-IX biosynthesis; protoporphyrinogen-IX from coproporphyrinogen-III (O2 route): step 1/1. Functionally, involved in the heme biosynthesis. Catalyzes the aerobic oxidative decarboxylation of propionate groups of rings A and B of coproporphyrinogen-III to yield the vinyl groups in protoporphyrinogen-IX. The polypeptide is Oxygen-dependent coproporphyrinogen-III oxidase (Pseudomonas entomophila (strain L48)).